A 529-amino-acid polypeptide reads, in one-letter code: Type I inositol polyphosphate 5-phosphatase 5 (529 aa).

Catalytic stretches follow at residues 371–386 and 451–466; these read DRVL…VALT and KRRT…WKGE.

The protein belongs to the inositol polyphosphate 5-phosphatase family.

In terms of biological role, may be involved in the regulation of root hairs development. Required for restricting both the size of the root-hair initiation site and the width of the root hairs during the transition to tip growth, but is not required for normal subsequent tip growth. The sequence is that of Type I inositol polyphosphate 5-phosphatase 5 from Arabidopsis thaliana (Mouse-ear cress).